A 488-amino-acid polypeptide reads, in one-letter code: Cytochrome P450 family 716 subfamily AD polypeptide 2 (488 aa).

Residues 5-25 (LLLLSTLLILTLCCHFFYLFI) traverse the membrane as a helical segment. Cys433 provides a ligand contact to heme.

Belongs to the cytochrome P450 family. Heme serves as cofactor. In terms of tissue distribution, expressed in maturing fruits and in juice vesicles.

Its subcellular location is the membrane. It catalyses the reaction (1R,2R,3S,8R,10R,11R,15S,16S)-3-(acetyloxy)-15-[(4R)-4-[(2S)-3,3-dimethyloxiran-2-yl]-1,4-dihydroxybutan-2-yl]-2,7,7,11,16-pentamethyl-5-oxo-6-oxatetracyclo[9.7.0.0(2,8).0(12,16)]octadec-12-en-10-yl acetate + reduced [NADPH--hemoprotein reductase] + O2 = (1R,2R,3S,8R,10R,11R,15S,16S)-3-(acetyloxy)-15-(1-hydroxy-4-oxobutan-2-yl)-2,7,7,11,16-pentamethyl-5-oxo-6-oxatetracyclo[9.7.0.0(2,8).0(12,16)]octadec-12-en-10-yl acetate + 2-methylpropanoate + oxidized [NADPH--hemoprotein reductase] + H2O + 2 H(+). The protein operates within secondary metabolite biosynthesis; terpenoid biosynthesis. Monooxygenase involved in the biosynthesis of limonoids triterpene natural products such as limonin, a compound with insecticidal activity responsible for the bitter taste in citrus. Catalyzes the formation of (1R,2R,3S,8R,10R,11R,15S,16S)-3-(acetyloxy)-15-(1-hydroxy-4-oxobutan-2-yl)-2,7,7,11,16-pentamethyl-5-oxo-6-oxatetracyclo[9.7.0.0(2,8).0(12,16)]octadec-12-en-10-yl acetate. The polypeptide is Cytochrome P450 family 716 subfamily AD polypeptide 2 (Citrus sinensis (Sweet orange)).